A 332-amino-acid polypeptide reads, in one-letter code: Gibberellin 2-beta-dioxygenase (332 aa).

The Fe2OG dioxygenase domain occupies 175–280; it reads KSDSCFRLNH…RLSMIYFGGP (106 aa). Positions 204, 206, and 261 each coordinate Fe cation. The active site involves Arg271.

The protein belongs to the iron/ascorbate-dependent oxidoreductase family. GA2OX subfamily. The cofactor is Fe cation.

The catalysed reaction is gibberellin A1 + 2-oxoglutarate + O2 = gibberellin A8 + succinate + CO2. It participates in plant hormone biosynthesis; gibberellin biosynthesis. Catalyzes the 2-beta-hydroxylation of several biologically active gibberellins, leading to the homeostatic regulation of their endogenous level. Catabolism of gibberellins (GAs) plays a central role in plant development. Converts GA9/GA20 to GA51/GA29 and GA4/GA1 to GA34/GA8. The protein is Gibberellin 2-beta-dioxygenase (GA2OX1) of Phaseolus coccineus (Scarlet runner bean).